Reading from the N-terminus, the 673-residue chain is DNA ligase (673 aa).

NAD(+) is bound by residues 35-39, 84-85, and glutamate 115; these read DADYD and SL. The active-site N6-AMP-lysine intermediate is the lysine 117. NAD(+) contacts are provided by arginine 138, glutamate 180, lysine 296, and lysine 320. Cysteine 415, cysteine 418, cysteine 433, and cysteine 438 together coordinate Zn(2+). The BRCT domain occupies 595-673; sequence ERGTALAGQT…EDALKKLLGK (79 aa).

It belongs to the NAD-dependent DNA ligase family. LigA subfamily. The cofactor is Mg(2+). It depends on Mn(2+) as a cofactor.

The enzyme catalyses NAD(+) + (deoxyribonucleotide)n-3'-hydroxyl + 5'-phospho-(deoxyribonucleotide)m = (deoxyribonucleotide)n+m + AMP + beta-nicotinamide D-nucleotide.. DNA ligase that catalyzes the formation of phosphodiester linkages between 5'-phosphoryl and 3'-hydroxyl groups in double-stranded DNA using NAD as a coenzyme and as the energy source for the reaction. It is essential for DNA replication and repair of damaged DNA. The sequence is that of DNA ligase from Koribacter versatilis (strain Ellin345).